We begin with the raw amino-acid sequence, 631 residues long: Shootin-1 (631 aa).

Methionine 1 is modified (N-acetylmethionine). 2 positions are modified to phosphoserine: serine 3 and serine 4. Positions 7 to 353 form a coiled coil; the sequence is EKQLQLITSL…RVNQSENSVP (347 aa). Serine 101 carries the phosphoserine; by PAK1 modification. At serine 249 the chain carries Phosphoserine. The interval 343-511 is disordered; that stretch reads KRVNQSENSV…SESKSMPVLG (169 aa). A compositionally biased stretch (pro residues) spans 352 to 369; that stretch reads VPPPPPPPPPLPPPPPNP. The residue at position 375 (serine 375) is a Phosphoserine. Over residues 403–418 the composition is skewed to basic and acidic residues; that stretch reads TDLKRQAVEEMMDRIK. Residues 456 to 465 are compositionally biased toward polar residues; the sequence is LNKSTSSRSL. At serine 473 the chain carries Phosphoserine. Threonine 487 bears the Phosphothreonine mark. Polar residues predominate over residues 490-505; sequence ADSSSPTGILATSESK. Serine 494 is subject to Phosphoserine. The residue at position 496 (threonine 496) is a Phosphothreonine. Phosphoserine occurs at positions 506, 515, 532, and 534. Disordered regions lie at residues 524 to 566 and 579 to 631; these read KTLE…IGCR and VVVL…SSNC. Threonine 537 bears the Phosphothreonine mark. Residues 550–561 show a composition bias toward polar residues; sequence CTSSKVTFQPPS. A compositionally biased stretch (basic and acidic residues) spans 590 to 631; the sequence is PQTKDQVAEKDPTQHKEDEGEIQPENKEDSIENVRETDSSNC.

Belongs to the shootin family. As to quaternary structure, interacts with L1CAM; this interaction occurs in axonal growth cones. Interacts with actin filament retrograde flow; this interaction is enhanced in a netrin-1- and PAK1-dependent manner and promotes F-actin-substrate coupling and concomitant formation of traction forces at axonal growth cones. Interacts with RUFY3. Interacts with PFN2. Interacts (via N-terminus) with KIF20B; this interaction is direct and promotes the association of SHTN1 to microtubules in primary neurons. Associates with microtubule. Post-translationally, phosphorylated on Ser-101 and Ser-249 by PAK1 through a CDC42- and RAC1-dependent signaling pathway, which enhances its association with F-actin retrograde flow in filopodia and lamellipodia of axonal growth cones. Phosphorylation on Ser-101 and Ser-249 is increased by netrin-1.

It localises to the perikaryon. Its subcellular location is the cell projection. It is found in the axon. The protein resides in the growth cone. The protein localises to the cytoplasm. It localises to the cytoskeleton. Its subcellular location is the filopodium. It is found in the lamellipodium. Involved in the generation of internal asymmetric signals required for neuronal polarization and neurite outgrowth. Mediates netrin-1-induced F-actin-substrate coupling or 'clutch engagement' within the axon growth cone through activation of CDC42, RAC1 and PAK1-dependent signaling pathway, thereby converting the F-actin retrograde flow into traction forces, concomitantly with filopodium extension and axon outgrowth. Plays a role in cytoskeletal organization by regulating the subcellular localization of phosphoinositide 3-kinase (PI3K) activity at the axonal growth cone. Also plays a role in regenerative neurite outgrowth. In the developing cortex, cooperates with KIF20B to promote both the transition from the multipolar to the bipolar stage and the radial migration of cortical neurons from the ventricular zone toward the superficial layer of the neocortex. Involved in the accumulation of phosphatidylinositol 3,4,5-trisphosphate (PIP3) in the growth cone of primary hippocampal neurons. This is Shootin-1 from Homo sapiens (Human).